A 227-amino-acid polypeptide reads, in one-letter code: Ribose-5-phosphate isomerase A (227 aa).

Substrate-binding positions include 28–31, 85–88, and 98–101; these read TGST, DGAD, and KGGG. E107 functions as the Proton acceptor in the catalytic mechanism. K125 lines the substrate pocket.

It belongs to the ribose 5-phosphate isomerase family. Homodimer.

It catalyses the reaction aldehydo-D-ribose 5-phosphate = D-ribulose 5-phosphate. It functions in the pathway carbohydrate degradation; pentose phosphate pathway; D-ribose 5-phosphate from D-ribulose 5-phosphate (non-oxidative stage): step 1/1. Catalyzes the reversible conversion of ribose-5-phosphate to ribulose 5-phosphate. This chain is Ribose-5-phosphate isomerase A, found in Limosilactobacillus reuteri (strain DSM 20016) (Lactobacillus reuteri).